The following is an 81-amino-acid chain: Sulfur carrier protein TusA (81 aa).

The Cysteine persulfide intermediate role is filled by Cys19.

This sequence belongs to the sulfur carrier protein TusA family.

Its subcellular location is the cytoplasm. In terms of biological role, sulfur carrier protein which probably makes part of a sulfur-relay system. The sequence is that of Sulfur carrier protein TusA from Shewanella frigidimarina (strain NCIMB 400).